The chain runs to 591 residues: Paxillin (591 aa).

Position 1 is an N-acetylmethionine (Met1). Positions 3-15 (DLDALLADLESTT) match the LD motif 1 motif. The interval 17-138 (HISKRPVFLS…SSPTVMSTSL (122 aa)) is disordered. Tyr31 carries the post-translational modification Phosphotyrosine; by PTK6. Positions 45–54 (VPPPVPPPPS) are enriched in pro residues. Positions 69–101 (WQPSGSRFIHQQPQSSSPVYGSSAKTSSVSNPQ) are enriched in polar residues. Phosphoserine occurs at positions 83 and 85. A Phosphotyrosine modification is found at Tyr88. Residue Ser106 is modified to Phosphoserine. The residue at position 118 (Tyr118) is a Phosphotyrosine; by PTK6. Phosphoserine occurs at positions 119, 126, and 130. The segment covering 121 to 137 (PNKQKSAESSPTVMSTS) has biased composition (polar residues). Thr132 is subject to Phosphothreonine. Residues Ser137, Ser140, and Ser143 each carry the phosphoserine modification. The LD motif 2 motif lies at 144-156 (ELDRLLLELNAVQ). Residues 156-213 (QHNPPGFPADEANSGPPLPGALSPHYGVPETNSPLGGKAGPLTKEKPKRNGGRGLEDV) form a disordered region. Tyr181 carries the phosphotyrosine modification. The LD motif 3 signature appears at 216-228 (SVESLLDELESSV). At Ser230 the chain carries Phosphoserine. The interval 237 to 260 (VNQGEMSSPQRVTSTQQQTRISAS) is disordered. Ser244 is subject to Phosphoserine; by CDK5. 4 positions are modified to phosphoserine: Ser250, Ser258, Ser261, and Ser272. An LD motif 4 motif is present at residues 265–276 (ELDELMASLSDF). Over residues 289 to 300 (RCWAADWPRDGG) the composition is skewed to basic and acidic residues. The disordered stretch occupies residues 289–335 (RCWAADWPRDGGRSSPGGQDEGGFMAQGKTGSSSPPGGPPKPGSQLD). Phosphoserine is present on residues Ser303, Ser322, Ser332, and Ser340. The short motif at 333–345 (QLDSMLGSLQSDL) is the LD motif 5 element. LIM zinc-binding domains follow at residues 356-415 (GVCG…LFSP), 416-473 (RCYY…DMFA), 474-533 (PKCG…RRGS), and 534-591 (LCSG…KLFC). Position 533 is a phosphoserine (Ser533).

The protein belongs to the paxillin family. As to quaternary structure, binds to vinculin and to the SH3 domain of SRC. Interacts with GIT1, NUDT16L1/SDOS, PARVA, PARVB, SORBS1 and TGFB1I1. Component of cytoplasmic complexes, which also contain GIT1, ARHGEF6 and PAK1. Binds ASAP2. Interacts with RNF5 and PDCD10. Interacts with NEK3 and this interaction is prolactin-dependent. Interacts with PTK2/FAK1 and PTK2B/PYK2. Interacts with PTK6. Interacts with CD36. Interacts (via cytoplasmic domain) with CEACAM1; the interaction is phosphotyrosyl-dependent. Interacts with PXN; this complex stabilizes actin dynamics. Interacts with TRIM15. Interacts with PAK4; PAK4 acts as a scaffold to suppport PAXI phosphorylation at Ser-272. In terms of processing, phosphorylated by MAPK1/ERK2. Phosphorylated on tyrosine residues during integrin-mediated cell adhesion, embryonic development, fibroblast transformation and following stimulation of cells by mitogens. Phosphorylation at Ser-244 by CDK5 reduces its interaction with PTK2/FAK1 in matrix-cell focal adhesions (MCFA) during oligodendrocytes (OLs) differentiation. Phosphorylation at Tyr-31 and Tyr-118 by PTK6 promote the activation of RAC1 via CRK/CrKII, thereby promoting migration and invasion. Phosphorylation at Ser-250 by SLK is required for PXN redistribution and cell motility. Phosphorylation at Ser-272 promotes focal adhesion disassembly during cell migration.

The protein resides in the cytoplasm. It localises to the cytoskeleton. The protein localises to the cell junction. It is found in the focal adhesion. Its subcellular location is the cell cortex. In terms of biological role, cytoskeletal protein involved in actin-membrane attachment at sites of cell adhesion to the extracellular matrix (focal adhesion). Recruits other proteins such as TRIM15 to focal adhesion. This Pongo abelii (Sumatran orangutan) protein is Paxillin (PXN).